The primary structure comprises 360 residues: tRNA-specific 2-thiouridylase MnmA (360 aa).

Residues 8–15 (GMSGGVDS) and methionine 34 contribute to the ATP site. Residues 94–96 (NPD) form an interaction with target base in tRNA region. The active-site Nucleophile is cysteine 99. Residues cysteine 99 and cysteine 195 are joined by a disulfide bond. An ATP-binding site is contributed by glycine 123. Positions 145 to 147 (KDQ) are interaction with tRNA. Catalysis depends on cysteine 195, which acts as the Cysteine persulfide intermediate. An interaction with tRNA region spans residues 307-308 (RY).

It belongs to the MnmA/TRMU family.

It is found in the cytoplasm. It catalyses the reaction S-sulfanyl-L-cysteinyl-[protein] + uridine(34) in tRNA + AH2 + ATP = 2-thiouridine(34) in tRNA + L-cysteinyl-[protein] + A + AMP + diphosphate + H(+). In terms of biological role, catalyzes the 2-thiolation of uridine at the wobble position (U34) of tRNA, leading to the formation of s(2)U34. The chain is tRNA-specific 2-thiouridylase MnmA from Methylobacillus flagellatus (strain ATCC 51484 / DSM 6875 / VKM B-1610 / KT).